Here is a 392-residue protein sequence, read N- to C-terminus: 8-amino-7-oxononanoate synthase (392 aa).

Arg21 contacts substrate. A pyridoxal 5'-phosphate-binding site is contributed by 108 to 109 (GF). Residue His133 coordinates substrate. Residues Ser181, 206 to 209 (DDAH), and 237 to 240 (TLSK) each bind pyridoxal 5'-phosphate. Lys240 is modified (N6-(pyridoxal phosphate)lysine). Residue Thr354 coordinates substrate.

It belongs to the class-II pyridoxal-phosphate-dependent aminotransferase family. BioF subfamily. As to quaternary structure, homodimer. Requires pyridoxal 5'-phosphate as cofactor.

It carries out the reaction 6-carboxyhexanoyl-[ACP] + L-alanine + H(+) = (8S)-8-amino-7-oxononanoate + holo-[ACP] + CO2. The protein operates within cofactor biosynthesis; biotin biosynthesis. Its function is as follows. Catalyzes the decarboxylative condensation of pimeloyl-[acyl-carrier protein] and L-alanine to produce 8-amino-7-oxononanoate (AON), [acyl-carrier protein], and carbon dioxide. In Symbiobacterium thermophilum (strain DSM 24528 / JCM 14929 / IAM 14863 / T), this protein is 8-amino-7-oxononanoate synthase.